We begin with the raw amino-acid sequence, 379 residues long: tRNA-specific 2-thiouridylase MnmA (379 aa).

Residues 23–30 (AMSGGVDS) and Leu-49 each bind ATP. Cys-117 functions as the Nucleophile in the catalytic mechanism. A disulfide bridge connects residues Cys-117 and Cys-214. Position 141 (Gly-141) interacts with ATP. The segment at 163 to 165 (RDQ) is interaction with tRNA. Cys-214 acts as the Cysteine persulfide intermediate in catalysis.

The protein belongs to the MnmA/TRMU family.

The protein localises to the cytoplasm. It catalyses the reaction S-sulfanyl-L-cysteinyl-[protein] + uridine(34) in tRNA + AH2 + ATP = 2-thiouridine(34) in tRNA + L-cysteinyl-[protein] + A + AMP + diphosphate + H(+). Its function is as follows. Catalyzes the 2-thiolation of uridine at the wobble position (U34) of tRNA, leading to the formation of s(2)U34. This chain is tRNA-specific 2-thiouridylase MnmA, found in Cereibacter sphaeroides (strain KD131 / KCTC 12085) (Rhodobacter sphaeroides).